A 420-amino-acid chain; its full sequence is ATP phosphoribosyltransferase regulatory subunit (420 aa).

This sequence belongs to the class-II aminoacyl-tRNA synthetase family. HisZ subfamily. In terms of assembly, heteromultimer composed of HisG and HisZ subunits.

It is found in the cytoplasm. The protein operates within amino-acid biosynthesis; L-histidine biosynthesis; L-histidine from 5-phospho-alpha-D-ribose 1-diphosphate: step 1/9. Functionally, required for the first step of histidine biosynthesis. May allow the feedback regulation of ATP phosphoribosyltransferase activity by histidine. The protein is ATP phosphoribosyltransferase regulatory subunit of Bacillus cereus (strain AH820).